The following is a 398-amino-acid chain: MLDQNVITETKAEHLLHEYQPGAFFLASPHRVLLAKGICEIVPEADGQNQMETLSGRIAEALRQAKQSGQSRPLVVGAVPFDQVKAARLVVPEEVRWSGPLQFDHEEKEQQAGHTYHIKPVPEPEDYKNGVEQGLARIADGTLSKIVLSRSLHLTSPEPIQTDELLRHLAQHNSHGYTFAADVSSQEETSPRRTLLGASPELLVSRMGTQVVSNPLAGSRPRSNDPVEDQRRAAELLSSAKDLHEHAVVADAVAAALRPFCRTLEVPEKPSLIKTETMWHLSSVIKGELSDPSVTALELAAALHPTPAVCGTPTDLAREAILSIEPFDRGFFTGMVGWCDDAGDGEWIVTIRCAEAEERSLRLYAGAGVVAGSKPEDELQETSAKFRTMLRAMGVDHI.

Ser271 carries the phosphoserine modification.

The protein belongs to the isochorismate synthase family.

It catalyses the reaction chorismate = isochorismate. The protein operates within siderophore biosynthesis; bacillibactin biosynthesis. This chain is Isochorismate synthase DhbC (dhbC), found in Bacillus subtilis (strain 168).